The following is a 228-amino-acid chain: Pyridoxamine 5'-phosphate oxidase (228 aa).

Residue 20-23 (QYDK) coordinates pyridoxal 5'-phosphate. A Glycyl lysine isopeptide (Lys-Gly) (interchain with G-Cter in ubiquitin) cross-link involves residue Lys29. Residue 73-76 (RILL) participates in FMN binding. Residue Lys78 participates in pyridoxal 5'-phosphate binding. FMN contacts are provided by residues 88-89 (YS), 95-96 (RK), and Gln118. Tyr136, Arg140, and Ser144 together coordinate pyridoxal 5'-phosphate. Residues 153–154 (QS) and Trp199 each bind FMN. 205–207 (RLH) contacts pyridoxal 5'-phosphate. Arg209 serves as a coordination point for FMN.

Belongs to the pyridoxamine 5'-phosphate oxidase family. Homodimer. FMN serves as cofactor.

The protein localises to the mitochondrion intermembrane space. The enzyme catalyses pyridoxamine 5'-phosphate + O2 + H2O = pyridoxal 5'-phosphate + H2O2 + NH4(+). The catalysed reaction is pyridoxine 5'-phosphate + O2 = pyridoxal 5'-phosphate + H2O2. It participates in cofactor metabolism; pyridoxal 5'-phosphate salvage; pyridoxal 5'-phosphate from pyridoxamine 5'-phosphate: step 1/1. The protein operates within cofactor metabolism; pyridoxal 5'-phosphate salvage; pyridoxal 5'-phosphate from pyridoxine 5'-phosphate: step 1/1. Its function is as follows. Catalyzes the oxidation of either pyridoxine 5'-phosphate (PNP) or pyridoxamine 5'-phosphate (PMP) into pyridoxal 5'-phosphate (PLP). This Saccharomyces cerevisiae (strain ATCC 204508 / S288c) (Baker's yeast) protein is Pyridoxamine 5'-phosphate oxidase (PDX3).